Here is a 1454-residue protein sequence, read N- to C-terminus: Serine/threonine-protein kinase VPS15 (1454 aa).

Residue Gly2 is the site of N-myristoyl glycine attachment. Residues 27–300 (VHYVSQLNSS…LLNKYRGIFF (274 aa)) form the Protein kinase domain. Residues 33 to 41 (LNSSRFLKT) and Lys54 each bind ATP. Residue Asp147 is the Proton acceptor of the active site. 4 HEAT repeats span residues 460-497 (NKID…SVRK), 576-613 (KLIQ…FFGR), 615-652 (RTND…LLGT), and 654-691 (TLEQ…TGLI). WD repeat units follow at residues 1078 to 1118 (NEPN…VGEV), 1126 to 1165 (DCSS…QESE), 1229 to 1268 (PRHG…LIRS), 1275 to 1315 (APIT…CQYA), 1344 to 1382 (RSLN…SSKA), and 1422 to 1454 (YHHD…GIFQ).

The protein belongs to the protein kinase superfamily. Ser/Thr protein kinase family. As to quaternary structure, component of the autophagy-specific VPS34 PI3-kinase complex I composed of VPS15, VPS30, VPS34, ATG14 and ATG38; and of the VPS34 PI3-kinase complex II composed of VPS15, VPS30, VPS34 and VPS38. Interacts directly with ATG14 and GPA1. Interacts directly with VPS34. In terms of processing, autophosphorylated.

It is found in the golgi apparatus. The protein resides in the trans-Golgi network membrane. It localises to the endosome membrane. It catalyses the reaction L-seryl-[protein] + ATP = O-phospho-L-seryl-[protein] + ADP + H(+). The enzyme catalyses L-threonyl-[protein] + ATP = O-phospho-L-threonyl-[protein] + ADP + H(+). Its function is as follows. Serine/threonine-protein kinase required for cytoplasm to vacuole transport (Cvt) and autophagy as a part of the autophagy-specific VPS34 PI3-kinase complex I. This complex is essential to recruit the ATG8-phosphatidylinositol conjugate and the ATG12-ATG5 conjugate to the pre-autophagosomal structure. Is also involved in endosome-to-Golgi retrograde transport as part of the VPS34 PI3-kinase complex II. This second complex is required for the endosome-to-Golgi retrieval of PEP1 and KEX2, and the recruitment of VPS5 and VPS7, two components of the retromer complex, to endosomal membranes (probably through the synthesis of a specific pool of phosphatidylinositol 3-phosphate recruiting the retromer to the endosomes). By regulating VPS34 kinase activity, VPS15 appears to be essential for the efficient delivery of soluble hydrolases to the yeast vacuole. May function as a G protein beta subunit to propagate the pheromone response at the endosome with GPA1. The sequence is that of Serine/threonine-protein kinase VPS15 from Saccharomyces cerevisiae (strain ATCC 204508 / S288c) (Baker's yeast).